A 1009-amino-acid chain; its full sequence is Regulator of telomere elongation helicase 1 homolog (1009 aa).

The region spanning 7 to 322 (AGIPVHFPFE…KEMLLELEKA (316 aa)) is the Helicase ATP-binding domain. An ATP-binding site is contributed by 42-49 (SPTGTGKT). Positions 146, 164, 173, and 209 each coordinate [4Fe-4S] cluster. The short motif at 252–255 (DEAH) is the DEAH box element.

This sequence belongs to the helicase family. RAD3/XPD subfamily.

The protein localises to the nucleus. The enzyme catalyses ATP + H2O = ADP + phosphate + H(+). Functionally, a probable ATP-dependent DNA helicase implicated in DNA repair and the maintenance of genomic stability. Acts as an anti-recombinase to counteract toxic recombination and limit crossover during meiosis. Regulates meiotic recombination and crossover homeostasis by physically dissociating strand invasion events and thereby promotes noncrossover repair by meiotic synthesis dependent strand annealing (SDSA) as well as disassembly of D loop recombination intermediates. The polypeptide is Regulator of telomere elongation helicase 1 homolog (Drosophila persimilis (Fruit fly)).